The chain runs to 260 residues: uncharacterized protein (260 aa).

A signal peptide spans 1-22; it reads MGYLKGFALYISILILIVFIAG. Residue Cys23 is the site of N-palmitoyl cysteine attachment. Cys23 carries the S-diacylglycerol cysteine lipid modification.

This sequence belongs to the staphylococcal tandem lipoprotein family.

Its subcellular location is the cell membrane. This is an uncharacterized protein from Staphylococcus aureus (strain MSSA476).